Reading from the N-terminus, the 301-residue chain is Probable alpha-L-glutamate ligase (301 aa).

The ATP-grasp domain maps to 104–287 (MQLLSRKGIG…VAGLIIDFIE (184 aa)). Residues Lys141, 178–179 (EF), Asp187, and 211–213 (RSN) each bind ATP. Mg(2+)-binding residues include Asp248, Glu260, and Asn262. 3 residues coordinate Mn(2+): Asp248, Glu260, and Asn262.

The protein belongs to the RimK family. Mg(2+) serves as cofactor. The cofactor is Mn(2+).

This is Probable alpha-L-glutamate ligase from Aliivibrio fischeri (strain MJ11) (Vibrio fischeri).